A 668-amino-acid chain; its full sequence is Transketolase 1 (668 aa).

Residue histidine 26 coordinates substrate. Residues histidine 66 and 114–116 contribute to the thiamine diphosphate site; that span reads GPL. Mg(2+) is bound at residue aspartate 155. Thiamine diphosphate contacts are provided by glycine 156 and asparagine 185. Mg(2+) is bound by residues asparagine 185 and isoleucine 187. 3 residues coordinate substrate: histidine 261, arginine 358, and serine 385. Histidine 261 contributes to the thiamine diphosphate binding site. Glutamate 413 functions as the Proton donor in the catalytic mechanism. Phenylalanine 439 contacts thiamine diphosphate. Substrate-binding residues include histidine 463, aspartate 471, and arginine 522.

The protein belongs to the transketolase family. Homodimer. The cofactor is Mg(2+). Ca(2+) is required as a cofactor. It depends on Mn(2+) as a cofactor. Co(2+) serves as cofactor. Requires thiamine diphosphate as cofactor.

It carries out the reaction D-sedoheptulose 7-phosphate + D-glyceraldehyde 3-phosphate = aldehydo-D-ribose 5-phosphate + D-xylulose 5-phosphate. Functionally, catalyzes the transfer of a two-carbon ketol group from a ketose donor to an aldose acceptor, via a covalent intermediate with the cofactor thiamine pyrophosphate. The chain is Transketolase 1 (tktA) from Pasteurella multocida (strain Pm70).